Consider the following 780-residue polypeptide: Cation channel sperm-associated protein 1 (780 aa).

Disordered stretches follow at residues 1–37 (MDQNSVPEKAQNEADTNNADRFFRSHSSPPHHRPGHS), 71–306 (LSSH…QDHH), and 376–412 (QMSKKVHTQDISTKHSEDWGKEEGQFQKRKTGRLQRT). Over 1 to 447 (MDQNSVPEKA…EMIRNLTQSL (447 aa)) the chain is Cytoplasmic. Over residues 110–122 (SYGEDYHDELQRD) the composition is skewed to basic and acidic residues. A compositionally biased stretch (basic residues) spans 211–241 (QVPHRGWPHHHQVHHHGRSRHHEAHQHGKSP). Over residues 261–284 (SDYHSEYHQGDHHPSEYHHGDHPH) the composition is skewed to basic and acidic residues. Residues 285–299 (HTQHHYHQTHRHRDY) show a composition bias toward basic residues. Basic and acidic residues predominate over residues 387–401 (STKHSEDWGKEEGQF). The span at 402-412 (QKRKTGRLQRT) shows a compositional bias: basic residues. A helical membrane pass occupies residues 448-469 (AFETFIFFVVCLNTVMLVAQTF). At 470-478 (AEVEIRGEW) the chain is on the extracellular side. A helical membrane pass occupies residues 479 to 500 (YFMALDSIFFCIYVVEALLKII). Over 501–508 (ALGLSYFF) the chain is Cytoplasmic. The helical transmembrane segment at 509–531 (DFWNNLDFFIMAMAVLDFLLMQT) threads the bilayer. Residues 532–540 (HSFAIYHQS) are Extracellular-facing. A helical transmembrane segment spans residues 541–563 (LFRILKVFKSLRALRAIRVLRRL). Residues 564–581 (SFLTSVQEVTGTLGQSLP) are Cytoplasmic-facing. The helical transmembrane segment at 582–604 (SIAAILILMFTCLFLFSAVLRAL) threads the bilayer. Residues 605–615 (FRKSDPKRFQN) lie on the Extracellular side of the membrane. An intramembrane region (helical; Pore-forming) is located at residues 616–628 (IFTTIFTLFTLLT). The Extracellular portion of the chain corresponds to 629 to 645 (LDDWSLIYMDSRAQGAW). Residues 646–671 (YIIPILVIYIIIQYFIFLNLVITVLV) form a helical membrane-spanning segment. Residues 672–780 (DSFQTALFKG…FEAGEEDFRN (109 aa)) lie on the Cytoplasmic side of the membrane.

It belongs to the cation channel sperm-associated (TC 1.A.1.19) family. In terms of assembly, component of the CatSper complex or CatSpermasome composed of the core pore-forming members CATSPER1, CATSPER2, CATSPER3 and CATSPER4 as well as auxiliary members CATSPERB, CATSPERG, CATSPERD, CATSPERE, CATSPERZ, C2CD6/CATSPERT, TMEM249, TMEM262 and EFCAB9. HSPA1 may be an additional auxiliary complex member. The core complex members CATSPER1, CATSPER2, CATSPER3 and CATSPER4 form a heterotetrameric channel. The auxiliary CATSPERB, CATSPERG, CATSPERD and CATSPERE subunits form a pavilion-like structure over the pore which stabilizes the complex through interactions with CATSPER4, CATSPER3, CATSPER1 and CATSPER2 respectively. TMEM262/CATSPERH interacts with CATSPERB, further stabilizing the complex. C2CD6/CATSPERT interacts at least with CATSPERD and is required for targeting the CatSper complex in the flagellar membrane. Interacts with Ca(v)3.3/CACNA1I, leading to suppression of T-type calcium channel activity. In terms of tissue distribution, testis-specific.

It localises to the cell projection. The protein resides in the cilium. It is found in the flagellum membrane. The catalysed reaction is Ca(2+)(in) = Ca(2+)(out). The CatSper calcium channel is indirectly activated by extracellular progesterone and prostaglandins following the sequence: progesterone &gt; PGF1-alpha = PGE1 &gt; PGA1 &gt; PGE2 &gt;&gt; PGD2. The CatSper calcium channel is directly inhibited by endocannabinoid 2-arachidonoylglycerol (2AG). Indirect activation by progesterone takes place via the following mechanism: progesterone binds and activates the acylglycerol lipase ABHD2, which in turn mediates hydrolysis of 2AG inhibitor, relieving inhibition of the CatSper channel. The primary effect of progesterone activation is to shift voltage dependence towards more physiological, negative membrane potentials; it is not mediated by metabotropic receptors and second messengers. Sperm capacitation enhances the effect of progesterone by providing additional negative shift. Also activated by the elevation of intracellular pH. Functionally, pore-forming subunit of the CatSper complex, a sperm-specific voltage-gated calcium channel that plays a central role in calcium-dependent physiological responses essential for successful fertilization, such as sperm hyperactivation, acrosome reaction and chemotaxis towards the oocyte. The polypeptide is Cation channel sperm-associated protein 1 (CATSPER1) (Homo sapiens (Human)).